Reading from the N-terminus, the 415-residue chain is MEKQKRGFVHYIVQGSLVKQILVGLIAGILLAWLAPSVAKSVSLLGTLFVGALKAVAPVLVWILVMSSIANHKKGQKTNIRPILILYILGTFFAALVAVAGSFIFPLPLVLAVNDAQMSPPENIIEVIKGLLVNVVANPVNALLNGNYIGILAWAIGLGIALRHAADSTKSLIHDMSEAVTQVVRVVIRFAPVGIFGLVSATIAETGFNALLGYVQLLVVLLSCMLVMALVVNPLIVYWKIRRNPYPLVFACLRESGVTAFFTRSSAANIPVNMAMCRRMNLHEDTYSVSIPLGATINMEGAAVTIPVLTLAAVNTLGIPVDVPTALLLSVVSAICACGASGVAGGSLLLIPLACSMFGISNEIAMQVVAVGLIIGVLQDSAETSLNSSTDVLFTAAVCQAEDDRLSSDQLTQRN.

8 helical membrane passes run 15-35 (GSLVKQILVGLIAGILLAWLA), 45-65 (LGTLFVGALKAVAPVLVWILV), 85-105 (ILYILGTFFAALVAVAGSFIF), 142-162 (ALLNGNYIGILAWAIGLGIAL), 193-213 (VGIFGLVSATIAETGFNALLG), 217-237 (LLVVLLSCMLVMALVVNPLIV), 301-321 (GAAVTIPVLTLAAVNTLGIPV), and 331-351 (VVSAICACGASGVAGGSLLLI).

The protein belongs to the dicarboxylate/amino acid:cation symporter (DAACS) (TC 2.A.23) family.

It localises to the cell inner membrane. It carries out the reaction L-serine(in) + Na(+)(in) = L-serine(out) + Na(+)(out). The catalysed reaction is L-threonine(in) + Na(+)(in) = L-threonine(out) + Na(+)(out). Functionally, involved in the import of serine and threonine into the cell, with the concomitant import of sodium (symport system). This Photorhabdus laumondii subsp. laumondii (strain DSM 15139 / CIP 105565 / TT01) (Photorhabdus luminescens subsp. laumondii) protein is Serine/threonine transporter SstT.